The sequence spans 657 residues: N-acetylgalactosaminyltransferase 7 (657 aa).

Over 1-6 the chain is Cytoplasmic; sequence MRLKIG. The chain crosses the membrane as a helical; Signal-anchor for type II membrane protein span at residues 7–29; the sequence is FILRSLLVVGSFLGLVVLWSSLT. The Lumenal portion of the chain corresponds to 30–657; that stretch reads PRPDDPSPLS…KWEMNNIHSV (628 aa). A disordered region spans residues 31–65; that stretch reads RPDDPSPLSRMREDRDVNDPMPNRGGNGLAPGEDR. Cystine bridges form between Cys197/Cys435, Cys426/Cys507, Cys545/Cys562, Cys585/Cys600, and Cys625/Cys640. Residues 206–317 form a catalytic subdomain A region; the sequence is LLTSSVVIVF…VNWYAPLVAP (112 aa). Substrate contacts are provided by Asp247 and Arg277. Residues Asp301 and His303 each coordinate Mn(2+). Residues 381–443 form a catalytic subdomain B region; sequence PYRSPAMAGG…PCSRVGHIYR (63 aa). Trp412 contributes to the substrate binding site. His440 is a Mn(2+) binding site. Arg443 is a substrate binding site. Residues 532–652 form the Ricin B-type lectin domain; it reads VDWGEIRGFE…SKTTQKWEMN (121 aa).

It belongs to the glycosyltransferase 2 family. GalNAc-T subfamily. The cofactor is Mn(2+). As to expression, widely expressed. Expressed in uterus, retina, kidney, small intestine, omentum, stomach and CNS.

The protein localises to the golgi apparatus membrane. It carries out the reaction L-seryl-[protein] + UDP-N-acetyl-alpha-D-galactosamine = a 3-O-[N-acetyl-alpha-D-galactosaminyl]-L-seryl-[protein] + UDP + H(+). The catalysed reaction is L-threonyl-[protein] + UDP-N-acetyl-alpha-D-galactosamine = a 3-O-[N-acetyl-alpha-D-galactosaminyl]-L-threonyl-[protein] + UDP + H(+). Its pathway is protein modification; protein glycosylation. Its function is as follows. Glycopeptide transferase involved in O-linked oligosaccharide biosynthesis, which catalyzes the transfer of an N-acetyl-D-galactosamine residue to an already glycosylated peptide. In contrast to other proteins of the family, it does not act as a peptide transferase that transfers GalNAc onto serine or threonine residue on the protein receptor, but instead requires the prior addition of a GalNAc on a peptide before adding additional GalNAc moieties. Some peptide transferase activity is however not excluded, considering that its appropriate peptide substrate may remain unidentified. The chain is N-acetylgalactosaminyltransferase 7 (GALNT7) from Homo sapiens (Human).